Consider the following 205-residue polypeptide: Polyamine-modulated factor 1 (205 aa).

The disordered stretch occupies residues 1-30 (MAEASSANLGSGCEEKRHEGSSSESVPPGT). Residues 141–193 (FLQQRDTLRRHVQKQEAENQQLADAVLAGRRQVEELQLQVQAQQQAWQALHRE) adopt a coiled-coil conformation.

In terms of assembly, component of the MIS12 complex composed of MIS12, DSN1, NSL1 and PMF1. Interacts with COPS7A. Interacts via its coiled-coil domain with the leucine-zipper domain of NFE2L2. The interaction with NFE2L2 is required for the transcriptional regulation of SSAT. In terms of tissue distribution, highest levels of expression in heart and skeletal muscle, with significant levels expressed in kidney and liver.

The protein localises to the nucleus. It localises to the chromosome. Its subcellular location is the centromere. The protein resides in the kinetochore. In terms of biological role, part of the MIS12 complex which is required for normal chromosome alignment and segregation and kinetochore formation during mitosis. May act as a cotranscription partner of NFE2L2 involved in regulation of polyamine-induced transcription of SSAT. This Homo sapiens (Human) protein is Polyamine-modulated factor 1.